Consider the following 512-residue polypeptide: ATP synthase subunit alpha (512 aa).

Position 169 to 176 (169 to 176 (GDRQTGKT)) interacts with ATP.

It belongs to the ATPase alpha/beta chains family. F-type ATPases have 2 components, CF(1) - the catalytic core - and CF(0) - the membrane proton channel. CF(1) has five subunits: alpha(3), beta(3), gamma(1), delta(1), epsilon(1). CF(0) has three main subunits: a(1), b(2) and c(9-12). The alpha and beta chains form an alternating ring which encloses part of the gamma chain. CF(1) is attached to CF(0) by a central stalk formed by the gamma and epsilon chains, while a peripheral stalk is formed by the delta and b chains.

The protein localises to the cell inner membrane. It catalyses the reaction ATP + H2O + 4 H(+)(in) = ADP + phosphate + 5 H(+)(out). Functionally, produces ATP from ADP in the presence of a proton gradient across the membrane. The alpha chain is a regulatory subunit. In Rickettsia bellii (strain OSU 85-389), this protein is ATP synthase subunit alpha.